Reading from the N-terminus, the 228-residue chain is Putative N-acetylmannosamine-6-phosphate 2-epimerase (228 aa).

It belongs to the NanE family.

It carries out the reaction an N-acyl-D-glucosamine 6-phosphate = an N-acyl-D-mannosamine 6-phosphate. It participates in amino-sugar metabolism; N-acetylneuraminate degradation; D-fructose 6-phosphate from N-acetylneuraminate: step 3/5. Converts N-acetylmannosamine-6-phosphate (ManNAc-6-P) to N-acetylglucosamine-6-phosphate (GlcNAc-6-P). This is Putative N-acetylmannosamine-6-phosphate 2-epimerase from Mycoplasmopsis pulmonis (strain UAB CTIP) (Mycoplasma pulmonis).